We begin with the raw amino-acid sequence, 471 residues long: Proton-coupled amino acid transporter-like protein pathetic (471 aa).

An N-linked (GlcNAc...) asparagine glycan is attached at N61. Transmembrane regions (helical) follow at residues 81-101, 153-173, 187-207, 216-236, 253-273, 283-303, 337-357, 375-395, 397-417, and 432-452; these read FAFM…TAFI, ILFG…VIVA, AVSL…IAWV, VSMV…YYLV, LPQF…VMPL, FLGI…IYML, LISL…LEII, VLRT…PTIG, FMGL…PVVI, and WILW…VFGT.

This sequence belongs to the amino acid/polyamine transporter 2 family. In third instar larvae, expressed at highest levels in the brain and digestive system with particularly high levels in surface glia of the brain (at protein level). In third instar larvae, expressed in all cells of the body wall (at protein level). Within the body wall of third instar larvae, most highly expressed in epithelial cells and sensory neurons. Expressed at a similar level in all da neurons (at protein level). Widely expressed during embryonic and late larval stages. Levels are highly dynamic in embryogenesis with surges of expression in many structures, including muscle primordia, salivary glands, proventriculus, trachea and gonads. Expressed in all or most cells of larval imaginal disks. Expression is also particularly strong in the pouch and hinge regions of the wing disk and in the morphogenetic furrow of the eye disk.

The protein localises to the cell membrane. Its subcellular location is the lysosome membrane. It localises to the late endosome membrane. The protein resides in the cell projection. It is found in the axon. The protein localises to the dendrite. Its subcellular location is the perikaryon. It localises to the cytoplasm. Functionally, amino acid transporter which has pH-dependent electrogenic transport activity for alanine and glycine but not for proline. Plays a role in positive regulation of growth by directly or indirectly modulating the effects of the TOR signaling pathway. Required in a cell-autonomous manner for dendrite growth in neurons with large dendrite arbors. The chain is Proton-coupled amino acid transporter-like protein pathetic from Drosophila melanogaster (Fruit fly).